The primary structure comprises 404 residues: Cysteine--tRNA ligase (404 aa).

Position 14 (cysteine 14) interacts with Zn(2+). The 'HIGH' region motif lies at 16–26 (PTVYSDVHIGN). The Zn(2+) site is built by cysteine 190, histidine 216, and glutamate 220. Positions 248–252 (KMAKS) match the 'KMSKS' region motif. Lysine 251 serves as a coordination point for ATP.

The protein belongs to the class-I aminoacyl-tRNA synthetase family. In terms of assembly, monomer. Zn(2+) is required as a cofactor.

It localises to the cytoplasm. The enzyme catalyses tRNA(Cys) + L-cysteine + ATP = L-cysteinyl-tRNA(Cys) + AMP + diphosphate. This chain is Cysteine--tRNA ligase, found in Mesomycoplasma hyopneumoniae (strain 232) (Mycoplasma hyopneumoniae).